A 488-amino-acid polypeptide reads, in one-letter code: 3-octaprenyl-4-hydroxybenzoate carboxy-lyase (488 aa).

Residue asparagine 172 participates in Mn(2+) binding. Prenylated FMN contacts are provided by residues 175-177 (IYR), 189-191 (RWL), and 194-195 (RG). A Mn(2+)-binding site is contributed by glutamate 238. The active-site Proton donor is aspartate 287.

It belongs to the UbiD family. As to quaternary structure, homohexamer. It depends on prenylated FMN as a cofactor. Requires Mn(2+) as cofactor.

The protein localises to the cell membrane. It catalyses the reaction a 4-hydroxy-3-(all-trans-polyprenyl)benzoate + H(+) = a 2-(all-trans-polyprenyl)phenol + CO2. Its pathway is cofactor biosynthesis; ubiquinone biosynthesis. In terms of biological role, catalyzes the decarboxylation of 3-octaprenyl-4-hydroxy benzoate to 2-octaprenylphenol, an intermediate step in ubiquinone biosynthesis. In Legionella pneumophila subsp. pneumophila (strain Philadelphia 1 / ATCC 33152 / DSM 7513), this protein is 3-octaprenyl-4-hydroxybenzoate carboxy-lyase.